We begin with the raw amino-acid sequence, 373 residues long: PqqA peptide cyclase (373 aa).

Residues 9 to 224 enclose the Radical SAM core domain; sequence LTKPRWLLAE…QSYKEKVKGR (216 aa). 3 residues coordinate [4Fe-4S] cluster: C23, C27, and C30.

The protein belongs to the radical SAM superfamily. PqqE family. Interacts with PqqD. The interaction is necessary for activity of PqqE. It depends on [4Fe-4S] cluster as a cofactor.

The catalysed reaction is [PQQ precursor protein] + S-adenosyl-L-methionine = E-Y cross-linked-[PQQ precursor protein] + 5'-deoxyadenosine + L-methionine + H(+). The protein operates within cofactor biosynthesis; pyrroloquinoline quinone biosynthesis. In terms of biological role, catalyzes the cross-linking of a glutamate residue and a tyrosine residue in the PqqA protein as part of the biosynthesis of pyrroloquinoline quinone (PQQ). This Methylococcus capsulatus (strain ATCC 33009 / NCIMB 11132 / Bath) protein is PqqA peptide cyclase.